A 394-amino-acid polypeptide reads, in one-letter code: Ornithine aminotransferase 1 (394 aa).

At lysine 252 the chain carries N6-(pyridoxal phosphate)lysine.

The protein belongs to the class-III pyridoxal-phosphate-dependent aminotransferase family. OAT subfamily. Pyridoxal 5'-phosphate is required as a cofactor.

It is found in the cytoplasm. The enzyme catalyses a 2-oxocarboxylate + L-ornithine = L-glutamate 5-semialdehyde + an L-alpha-amino acid. It functions in the pathway amino-acid biosynthesis; L-proline biosynthesis; L-glutamate 5-semialdehyde from L-ornithine: step 1/1. Functionally, catalyzes the interconversion of ornithine to glutamate semialdehyde. In Staphylococcus aureus (strain Mu50 / ATCC 700699), this protein is Ornithine aminotransferase 1.